A 506-amino-acid polypeptide reads, in one-letter code: Glucosidase 2 subunit beta (506 aa).

A signal peptide spans 1–23 (MKFSQWYTLTAPLLISSLYTVNA). Cysteine 86 and cysteine 108 are disulfide-bonded. Coiled coils occupy residues 172–243 (SLVA…LYET) and 338–374 (ESYR…LEYH). The MRH domain occupies 279–474 (ESCNNHLSML…KMKSPAACSP (196 aa)). 2 cysteine pairs are disulfide-bonded: cysteine 431-cysteine 460 and cysteine 445-cysteine 472. The ER retrieval sequence signature appears at 503–506 (VDEL).

In terms of assembly, heterodimer of a catalytic subunit alpha (gls2) and a subunit beta (gtb1).

It localises to the endoplasmic reticulum. Its function is as follows. Subunit of glucosidase 2, which cleaves sequentially the 2 innermost alpha-1,3-linked glucose residues from the Glc(2)Man(9)GlcNAc(2) oligosaccharide precursor of immature glycoproteins in the endoplasmic reticulum (ER). Specifically required for the cleavage of the final glucose. The subunit beta retains the catalytic subunit alpha in the ER. This chain is Glucosidase 2 subunit beta (gtb1), found in Schizosaccharomyces pombe (strain 972 / ATCC 24843) (Fission yeast).